The primary structure comprises 558 residues: T-complex protein 1 subunit eta (558 aa).

The interval 524-558 (VRNPKSEQPKAPPGGLRRGGPQGMAGLAKNARLGK) is disordered.

It belongs to the TCP-1 chaperonin family. As to quaternary structure, heterooligomeric complex of about 850 to 900 kDa that forms two stacked rings, 12 to 16 nm in diameter.

Its subcellular location is the cytoplasm. Its function is as follows. Molecular chaperone; assists the folding of proteins upon ATP hydrolysis. Known to play a role, in vitro, in the folding of actin and tubulin. The polypeptide is T-complex protein 1 subunit eta (Tetrahymena pyriformis).